A 295-amino-acid polypeptide reads, in one-letter code: Perivine-Nbeta-methyltransferase (295 aa).

Positions 76–85 are SAM motif I; that stretch reads ILDVGCGKGG. Positions 138 to 144 match the Vacuolar targeting signal motif; that stretch reads DGSFELI. The SAM motif II stretch occupies residues 139–147; it reads GSFELIFVI. The segment at 166 to 175 is SAM motif III; the sequence is VAAPGAQIVI.

This sequence belongs to the class I-like SAM-binding methyltransferase superfamily. gTMT family. Homodimer. Mainly expressed in young leaves, and, to a lower extent, in mature leaves, flowers, stems and roots (at protein level). Transcripts levels are highest in flowers, moderate in leaves and low in roots and stems.

Its subcellular location is the vacuole membrane. It carries out the reaction perivine + S-adenosyl-L-methionine = vobasine + S-adenosyl-L-homocysteine + 2 H(+). The protein operates within alkaloid biosynthesis; vindoline biosynthesis. Functionally, S-adenosyl-L-methionine-dependent N-methyltransferase involved in the biosynthesis of biologically active monoterpenoid indole alkaloids (MIAs) natural products including vindoline. Catalyzes the conversion of perivine to Nbeta-methylperivine (vobasine) by methylating its N4 nitrogen. Inactive with picrinine as substrate. The chain is Perivine-Nbeta-methyltransferase from Catharanthus roseus (Madagascar periwinkle).